Here is a 92-residue protein sequence, read N- to C-terminus: Large ribosomal subunit protein eL43 (92 aa).

4 residues coordinate Zn(2+): Cys-39, Cys-42, Cys-57, and Cys-60. A C4-type zinc finger spans residues Cys-39–Cys-60.

Belongs to the eukaryotic ribosomal protein eL43 family. As to quaternary structure, component of the large ribosomal subunit.

Its subcellular location is the cytoplasm. Its function is as follows. Component of the large ribosomal subunit. The ribosome is a large ribonucleoprotein complex responsible for the synthesis of proteins in the cell. The sequence is that of Large ribosomal subunit protein eL43 (rpl37a) from Ictalurus punctatus (Channel catfish).